The sequence spans 492 residues: Malonyl-CoA decarboxylase, mitochondrial (492 aa).

Residues 1–28 form a disordered region; it reads MRGLGPGLRARRLLPLRSPPRPPGPRGR. A mitochondrion-targeting transit peptide spans 1–38; sequence MRGLGPGLRARRLLPLRSPPRPPGPRGRRLCGGLAASA. Positions 39 to 189 are alpha-helical domain; it reads MDELLRRAVP…VLKSMLSEWF (151 aa). N6-acetyllysine is present on Lys58. Position 167 is an N6-acetyllysine; alternate (Lys167). Position 167 is an N6-succinyllysine; alternate (Lys167). Residues 190–492 are catalytic domain; that stretch reads SSGFLNLERV…VAQFQNNSKL (303 aa). At Lys210 the chain carries N6-acetyllysine. Lys221 bears the N6-succinyllysine mark. Malonyl-CoA is bound at residue 298-304; the sequence is QGVELGT. N6-acetyllysine is present on Lys316. Malonyl-CoA is bound at residue Ser328. Catalysis depends on Ser328, which acts as the Proton acceptor. N6-acetyllysine; alternate is present on Lys385. N6-succinyllysine; alternate is present on Lys385. Lys388 carries the N6-acetyllysine modification. Residue His422 participates in malonyl-CoA binding. His422 acts as the Proton donor in catalysis. N6-acetyllysine occurs at positions 441 and 471. Residues 490–492 carry the Microbody targeting signal motif; it reads SKL.

Homotetramer. Dimer of dimers. The two subunits within a dimer display conformational differences suggesting that at any given moment, only one of the two subunits is competent for malonyl-CoA binding and catalytic activity. Under oxidizing conditions, can form disulfide-linked homotetramers (in vitro). Associates with the peroxisomal targeting signal receptor PEX5. Post-translationally, interchain disulfide bonds may form in peroxisomes (Potential). Interchain disulfide bonds are not expected to form in the reducing environment of the cytoplasm and mitochondria. In terms of processing, acetylation at Lys-471 activates malonyl-CoA decarboxylase activity. Deacetylation at Lys-471 by SIRT4 represses activity, leading to promote lipogenesis.

It is found in the cytoplasm. The protein resides in the mitochondrion matrix. Its subcellular location is the peroxisome. It localises to the peroxisome matrix. The enzyme catalyses malonyl-CoA + H(+) = acetyl-CoA + CO2. The protein operates within metabolic intermediate biosynthesis; acetyl-CoA biosynthesis; acetyl-CoA from malonyl-CoA: step 1/1. Its activity is regulated as follows. Malonyl-CoA decarboxylase activity does not require any cofactors or divalent metal ions. Its function is as follows. Catalyzes the conversion of malonyl-CoA to acetyl-CoA. In the fatty acid biosynthesis MCD selectively removes malonyl-CoA and thus assures that methyl-malonyl-CoA is the only chain elongating substrate for fatty acid synthase and that fatty acids with multiple methyl side chains are produced. In peroxisomes it may be involved in degrading intraperoxisomal malonyl-CoA, which is generated by the peroxisomal beta-oxidation of odd chain-length dicarboxylic fatty acids. Plays a role in the metabolic balance between glucose and lipid oxidation in muscle independent of alterations in insulin signaling. Plays a role in controlling the extent of ischemic injury by promoting glucose oxidation. The sequence is that of Malonyl-CoA decarboxylase, mitochondrial from Mus musculus (Mouse).